The chain runs to 221 residues: Sugar transporter SWEET1 (221 aa).

The next 7 membrane-spanning stretches (helical) occupy residues 3–23, 42–62, 68–88, 96–116, 126–146, 160–180, and 186–206; these read AGGFLDSLIYGACVVFTLGMF, VQFLPFLTTEVNNLGWLSYGA, ILIVVNTVGAALQTLYILAYL, VVLLQTATLLGVLLLGYGYFW, LQLLGLFCSVFTISMYLSPLA, LSYPLTIATVLTSASWCLYGF, and YIMVSNFPGIVTSFIRFWLFW. Residues 10–94 form the MtN3/slv 1 domain; it reads LIYGACVVFT…LAYLHYCPRK (85 aa). The MtN3/slv 2 domain occupies 127–212; sequence QLLGLFCSVF…WLFWKYPQEQ (86 aa). The tract at residues 149–221 is mediates interaction with TRPV2; it reads AKVIQTKSTQ…QDRNYWFLQT (73 aa).

It belongs to the SWEET sugar transporter family. Interacts with TRPV2; the interaction probably occurs intracellularly and depends on TRPV2 N-glycosylation.

The protein resides in the golgi apparatus membrane. Its subcellular location is the cell membrane. Mediates sugar transport across membranes. May stimulate V(D)J recombination by the activation of RAG1. This chain is Sugar transporter SWEET1 (SLC50A1), found in Papio anubis (Olive baboon).